The following is a 649-amino-acid chain: Ubiquitin-associated and SH3 domain-containing protein B (649 aa).

Serine 20 carries the phosphoserine modification. At threonine 23 the chain carries Phosphothreonine. In terms of domain architecture, UBA spans 27–76 (NRQQRPGTIKHGSALDVLLSMGFPRARAQKALASTGGRSVQAACDWLFSH). The SH3 domain occupies 254–319 (ANHETLQVIY…PENYITKADE (66 aa)). Residues 380-649 (GPQKRCLFVC…FNWRETLLQE (270 aa)) are protein tyrosine phosphatase. Arginine 390 is an active-site residue. Histidine 391 (tele-phosphohistidine intermediate) is an active-site residue. Histidine 576 is a catalytic residue.

In terms of assembly, homodimer. Interacts with JAK2 (in vitro). Interacts with CBL. Part of a complex containing CBL and activated EGFR. Interacts with ubiquitin and with mono-ubiquitinated proteins. Interacts with ZAP70 (ubiquitinated form).

It is found in the cytoplasm. It localises to the nucleus. The enzyme catalyses O-phospho-L-tyrosyl-[protein] + H2O = L-tyrosyl-[protein] + phosphate. In terms of biological role, interferes with CBL-mediated down-regulation and degradation of receptor-type tyrosine kinases. Promotes accumulation of activated target receptors, such as T-cell receptors and EGFR, on the cell surface. Exhibits tyrosine phosphatase activity toward several substrates including EGFR, FAK, SYK, and ZAP70. Down-regulates proteins that are dually modified by both protein tyrosine phosphorylation and ubiquitination. The chain is Ubiquitin-associated and SH3 domain-containing protein B (UBASH3B) from Homo sapiens (Human).